Here is a 400-residue protein sequence, read N- to C-terminus: Phosphoglycerate kinase (400 aa).

Residues 22–24 (DFN), Arg38, 61–64 (HLGR), Arg119, and Arg152 each bind substrate. ATP contacts are provided by residues Lys205, Gly296, Glu327, and 353 to 356 (GGDT).

This sequence belongs to the phosphoglycerate kinase family. In terms of assembly, monomer.

Its subcellular location is the cytoplasm. The catalysed reaction is (2R)-3-phosphoglycerate + ATP = (2R)-3-phospho-glyceroyl phosphate + ADP. Its pathway is carbohydrate degradation; glycolysis; pyruvate from D-glyceraldehyde 3-phosphate: step 2/5. In Campylobacter jejuni subsp. jejuni serotype O:6 (strain 81116 / NCTC 11828), this protein is Phosphoglycerate kinase.